Reading from the N-terminus, the 356-residue chain is Tyrosine recombinase XerS (356 aa).

The region spanning 16 to 121 is the Core-binding (CB) domain; that stretch reads IMPWYVLDYY…ALSSLYKYLT (106 aa). A Tyr recombinase domain is found at 169–354; the sequence is AFLDYVDKEY…VNDEQKTALD (186 aa). Catalysis depends on residues arginine 210, lysine 234, histidine 306, arginine 309, and histidine 332. The O-(3'-phospho-DNA)-tyrosine intermediate role is filled by tyrosine 341.

Belongs to the 'phage' integrase family. XerS subfamily.

It is found in the cytoplasm. Its activity is regulated as follows. FtsK is required for recombination. Functionally, site-specific tyrosine recombinase, which acts by catalyzing the cutting and rejoining of the recombining DNA molecules. Essential to convert dimers of the bacterial chromosome into monomers to permit their segregation at cell division. This is Tyrosine recombinase XerS from Streptococcus pyogenes serotype M12 (strain MGAS9429).